A 379-amino-acid polypeptide reads, in one-letter code: Queuine tRNA-ribosyltransferase (379 aa).

The active-site Proton acceptor is D94. Substrate-binding positions include 94 to 98 (DSGGF), D148, Q191, and G218. An RNA binding region spans residues 249 to 255 (GVGSPDS). The Nucleophile role is filled by D268. Positions 273-277 (TRIAR) are RNA binding; important for wobble base 34 recognition. Positions 306, 308, 311, and 337 each coordinate Zn(2+).

The protein belongs to the queuine tRNA-ribosyltransferase family. As to quaternary structure, homodimer. Within each dimer, one monomer is responsible for RNA recognition and catalysis, while the other monomer binds to the replacement base PreQ1. It depends on Zn(2+) as a cofactor.

It carries out the reaction 7-aminomethyl-7-carbaguanine + guanosine(34) in tRNA = 7-aminomethyl-7-carbaguanosine(34) in tRNA + guanine. The protein operates within tRNA modification; tRNA-queuosine biosynthesis. Catalyzes the base-exchange of a guanine (G) residue with the queuine precursor 7-aminomethyl-7-deazaguanine (PreQ1) at position 34 (anticodon wobble position) in tRNAs with GU(N) anticodons (tRNA-Asp, -Asn, -His and -Tyr). Catalysis occurs through a double-displacement mechanism. The nucleophile active site attacks the C1' of nucleotide 34 to detach the guanine base from the RNA, forming a covalent enzyme-RNA intermediate. The proton acceptor active site deprotonates the incoming PreQ1, allowing a nucleophilic attack on the C1' of the ribose to form the product. After dissociation, two additional enzymatic reactions on the tRNA convert PreQ1 to queuine (Q), resulting in the hypermodified nucleoside queuosine (7-(((4,5-cis-dihydroxy-2-cyclopenten-1-yl)amino)methyl)-7-deazaguanosine). This is Queuine tRNA-ribosyltransferase from Halalkalibacterium halodurans (strain ATCC BAA-125 / DSM 18197 / FERM 7344 / JCM 9153 / C-125) (Bacillus halodurans).